We begin with the raw amino-acid sequence, 737 residues long: Serine/threonine-protein kinase dst1 (737 aa).

Residues 29–281 form the Protein kinase domain; sequence YHIQERLGKG…AKELLNHEFI (253 aa). Residues 35–43 and Lys-58 each bind ATP; that span reads LGKGSFGQV. Catalysis depends on Asp-149, which acts as the Proton acceptor. Disordered regions lie at residues 305-356, 372-475, 491-559, and 575-631; these read SMFE…SNNY, KDDA…TTDQ, KPIT…ISNN, and NNNI…ESLS. Low complexity-rich tracts occupy residues 334 to 345, 401 to 410, 425 to 444, and 454 to 473; these read NNNTVTNYSTVI, SSCSSSSSSS, PITNSPKISPISSNNINKIP, and ATTTTTTTTTTTTTAASTTT. The segment covering 491–503 has biased composition (polar residues); that stretch reads KPITSSNSTSVTP. Over residues 510-525 the composition is skewed to low complexity; the sequence is SNNTTTTSNINTPIKP. 2 stretches are compositionally biased toward polar residues: residues 529 to 554 and 585 to 596; these read LKKSNSNTPVQLKTSGDKTPTTTPLK and SPTTGQKIIKTN. The segment covering 597 to 615 has biased composition (low complexity); the sequence is SGGVLKSSGGLSSKRSPSS.

It belongs to the protein kinase superfamily. STE Ser/Thr protein kinase family. STE20 subfamily. Requires Mg(2+) as cofactor.

The enzyme catalyses L-seryl-[protein] + ATP = O-phospho-L-seryl-[protein] + ADP + H(+). The catalysed reaction is L-threonyl-[protein] + ATP = O-phospho-L-threonyl-[protein] + ADP + H(+). The protein is Serine/threonine-protein kinase dst1 of Dictyostelium discoideum (Social amoeba).